A 329-amino-acid polypeptide reads, in one-letter code: Quinone oxidoreductase (329 aa).

An N-acetylalanine modification is found at A2. The residue at position 23 (K23) is an N6-acetyllysine. Residues Y53, 158 to 161 (SGGV), G181, H200, N229, 246 to 249 (VGSR), and 269 to 271 (VTL) contribute to the NADP(+) site. S248 carries the post-translational modification Phosphoserine. Position 296 is an N6-succinyllysine (K296).

It belongs to the zinc-containing alcohol dehydrogenase family. Quinone oxidoreductase subfamily. In terms of assembly, homotetramer. As to expression, only very low amounts in the lens.

The protein localises to the cytoplasm. The catalysed reaction is 2 a quinone + NADPH + H(+) = 2 a 1,4-benzosemiquinone + NADP(+). Functionally, does not have alcohol dehydrogenase activity. Binds NADP and acts through a one-electron transfer process. Orthoquinones, such as 1,2-naphthoquinone or 9,10-phenanthrenequinone, are the best substrates (in vitro). May act in the detoxification of xenobiotics. Interacts with (AU)-rich elements (ARE) in the 3'-UTR of target mRNA species. Enhances the stability of mRNA coding for BCL2. NADPH binding interferes with mRNA binding. This Homo sapiens (Human) protein is Quinone oxidoreductase (CRYZ).